A 107-amino-acid polypeptide reads, in one-letter code: MSISLTESAAQRIVAFLDNRGKGVGLRLGVRTSGCSGMAYVLEFADVVNEEDQVFEDKGVKVIVDGKSILYLDGTELDFVKEGLNEGFKFNNPNVSSECGCGESFHV.

Residues Cys-35, Cys-99, and Cys-101 each contribute to the Fe cation site.

This sequence belongs to the HesB/IscA family. As to quaternary structure, homodimer; may form tetramers and higher multimers. Requires Fe cation as cofactor.

Its function is as follows. Is able to transfer iron-sulfur clusters to apo-ferredoxin. Multiple cycles of [2Fe2S] cluster formation and transfer are observed, suggesting that IscA acts catalytically. Recruits intracellular free iron so as to provide iron for the assembly of transient iron-sulfur cluster in IscU in the presence of IscS, L-cysteine and the thioredoxin reductase system TrxA/TrxB. The chain is Iron-binding protein IscA from Xenorhabdus nematophila (strain ATCC 19061 / DSM 3370 / CCUG 14189 / LMG 1036 / NCIMB 9965 / AN6).